The chain runs to 612 residues: Pentatricopeptide repeat-containing protein At4g14050, mitochondrial (612 aa).

The transit peptide at 1-24 directs the protein to the mitochondrion; the sequence is MLIPHYLHQLQLCARNRTLTTAKA. PPR repeat units lie at residues 37–71, 72–103, 104–138, 139–169, 170–204, 205–235, 237–271, 272–302, 303–337, 338–373, and 374–408; these read CCPL…DHIA, WASV…GLRP, DDFV…EYAN, DEVV…IRVK, NTIS…NLYS, WTAL…RVDI, DPLV…GFDS, CVFI…MRHR, DVVS…GVKP, NEVT…GIRP, and SLQH…PDEP. The tract at residues 409–485 is type E motif; sequence TWAALLSACK…DPGHSSVEVR (77 aa). The interval 486-516 is type E(+) motif; it reads KETEVFYAGETSHPLKEDIFRLLKKLEEEMR. The segment at 518–612 is type DYW motif; that stretch reads RNGYVPDTSW…GGKCSCNDFW (95 aa).

This sequence belongs to the PPR family. PCMP-H subfamily. As to quaternary structure, interacts with MORF8/RIP1 and MORF1/RIP8.

It localises to the mitochondrion. Its function is as follows. Involved in C-to-U editing of mitochondrial RNA. Required specifically for editing the mitochondrial NAD4, MT-CYB/COB and RPL16 transcripts. The sequence is that of Pentatricopeptide repeat-containing protein At4g14050, mitochondrial (PCMP-H13) from Arabidopsis thaliana (Mouse-ear cress).